A 666-amino-acid chain; its full sequence is Probable potassium transport system protein Kup (666 aa).

12 helical membrane-spanning segments follow: residues 16 to 36, 58 to 78, 99 to 119, 141 to 161, 167 to 187, 221 to 241, 253 to 273, 292 to 312, 343 to 363, 373 to 393, 402 to 422, and 424 to 444; these read GFII…LYTM, ISLI…LVAL, TPWL…DGAL, IFQN…LLFA, TGVI…FLGI, IFIL…YSDL, WPFV…WILA, FTMH…QALI, TYIP…VLLF, YGLA…FFLI, VLLM…ASAV, and FMHG…IMTI.

The protein belongs to the HAK/KUP transporter (TC 2.A.72) family.

Its subcellular location is the cell membrane. The catalysed reaction is K(+)(in) + H(+)(in) = K(+)(out) + H(+)(out). In terms of biological role, transport of potassium into the cell. Likely operates as a K(+):H(+) symporter. This Streptococcus agalactiae serotype Ia (strain ATCC 27591 / A909 / CDC SS700) protein is Probable potassium transport system protein Kup.